Reading from the N-terminus, the 149-residue chain is Large ribosomal subunit protein uL15 (149 aa).

A disordered region spans residues Arg21–Gln54. Composition is skewed to gly residues over residues Ser23–Asn35 and Ser42–Gly52.

It belongs to the universal ribosomal protein uL15 family. Part of the 50S ribosomal subunit.

Its function is as follows. Binds to the 23S rRNA. The sequence is that of Large ribosomal subunit protein uL15 from Lawsonia intracellularis (strain PHE/MN1-00).